Consider the following 331-residue polypeptide: Meiotic recombination protein P22 (331 aa).

Residues 132 to 187 (NNIQKEVHQRNSQRRSIQCTPKKRGRKPKQPAKKLQSRISTDQLGSTPSPSKLPAK) form a disordered region. The span at 152 to 167 (PKKRGRKPKQPAKKLQ) shows a compositional bias: basic residues. Residues 168–181 (SRISTDQLGSTPSP) are compositionally biased toward polar residues.

The protein belongs to the TOP6B-like family.

The protein resides in the chromosome. Functionally, required for formation of the mei-W68-mediated double-strand breaks (DSBs) that initiate meiotic recombination. This Drosophila melanogaster (Fruit fly) protein is Meiotic recombination protein P22.